The sequence spans 160 residues: MAPK regulated corepressor interacting protein 2 (160 aa).

Methionine 1 is modified (N-acetylmethionine). The segment at 1 to 64 (MYTITKGPSK…GPWPLSSPGP (64 aa)) is disordered. Omega-N-methylarginine is present on arginine 35. Residues 37-61 (PAPPTSQPPRAQPFAQPPGPWPLSS) are compositionally biased toward pro residues. Serine 61 carries the phosphoserine modification. Arginine 65 is subject to Omega-N-methylarginine. Serine 82 carries the post-translational modification Phosphoserine.

This sequence belongs to the MCRIP family. In terms of assembly, interacts with DDX6. Interacts with MCRIP1.

The protein localises to the cytoplasm. It localises to the stress granule. The protein resides in the nucleus. The protein is MAPK regulated corepressor interacting protein 2 (MCRIP2) of Homo sapiens (Human).